The chain runs to 1178 residues: Mannosyltransferase regulator 4 (1178 aa).

Residues 1–27 lie on the Cytoplasmic side of the membrane; the sequence is MLQRISSKLHRRFLSGLLRVKHYPLRR. The chain crosses the membrane as a helical; Signal-anchor for type II membrane protein span at residues 28 to 48; sequence ILLPLILLQIIIITFIWSNSP. Topologically, residues 49–1178 are lumenal; that stretch reads QRNGLGRDAD…KKKQEEGHSN (1130 aa). A DXD motif is present at residues 519–521; that stretch reads DFD. The disordered stretch occupies residues 1041-1178; sequence EKKKKEEEEK…KKKQEEGHSN (138 aa). 6 tandem repeats follow at residues 1042 to 1049, 1050 to 1057, 1058 to 1065, 1066 to 1073, 1074 to 1081, and 1082 to 1089. The interval 1042–1174 is 17 X 8 AA tandem repeats of K-K-K-K-E-E-E-E; the sequence is KKKKEEEEKK…EEEEKKKQEE (133 aa). The stretch at 1090-1097 is one 7; approximate repeat; the sequence is KKKQEEEE. Residues 1098-1105 form repeat 8; it reads KKKKEEEE. A 9; approximate repeat occupies 1106–1113; sequence KKKQEEGE. The stretch at 1114–1121 is one 10; approximate repeat; sequence KMKNEDEE. One copy of the 11; approximate repeat lies at 1122–1129; the sequence is NKKNEDEE. Repeat unit 12 spans residues 1130–1137; that stretch reads KKKNEEEE. The 13; approximate repeat unit spans residues 1138–1144; it reads KKKQEEK. One copy of the 14; approximate repeat lies at 1145 to 1152; that stretch reads NKKNEDEE. Residues 1153–1160 form a 15; approximate repeat; it reads KKKQEEEE. A 16; approximate repeat occupies 1161 to 1168; sequence KKKNEEEE. A 17; truncated repeat occupies 1169–1174; the sequence is KKKQEE.

The protein belongs to the MNN4 family.

It is found in the golgi apparatus membrane. In terms of biological role, golgi apparatus protein involved in N-glycan mannosylphosphorylation. While MNN4 seems to have a regulatory role in N-glycan mannosylphosphorylation, a transferase activity of MNN4 can not be ruled out. Mediates mannosylphosphate transfer in both the core and outer chain portions of N-linked oligosaccharides. Has partially redundant function with MNN14. In Saccharomyces cerevisiae (strain ATCC 204508 / S288c) (Baker's yeast), this protein is Mannosyltransferase regulator 4.